A 904-amino-acid polypeptide reads, in one-letter code: Pyrimidine pathway regulatory protein 1 (904 aa).

Residues 1–11 (MKQKKFNSKKS) are compositionally biased toward basic residues. The disordered stretch occupies residues 1–27 (MKQKKFNSKKSNRTDLSKRGDSPNIGI). Residues 12-21 (NRTDLSKRGD) show a composition bias toward basic and acidic residues. Zn(2+)-binding residues include C34, C37, C44, C51, C54, and C61. The segment at residues 34–61 (CKRCRLKKIKCDQEFPSCKRCAKLEVPC) is a DNA-binding region (zn(2)-C6 fungal-type). Positions 883–904 (GNEGESSYDISKGKNSESGGIF) are disordered.

As to quaternary structure, binds DNA as a homodimer.

The protein resides in the nucleus. Its function is as follows. Positive regulator of URA1 and URA3 expression. The polypeptide is Pyrimidine pathway regulatory protein 1 (PPR1) (Saccharomyces cerevisiae (strain ATCC 204508 / S288c) (Baker's yeast)).